A 212-amino-acid polypeptide reads, in one-letter code: NAD(P)H-hydrate epimerase (212 aa).

The 203-residue stretch at 10–212 folds into the YjeF N-terminal domain; that stretch reads MRSLERAAIA…IGVIVKPIGL (203 aa). 65-69 lines the (6S)-NADPHX pocket; it reads NNGGD. The K(+) site is built by N66 and D129. (6S)-NADPHX-binding positions include 133–139 and D161; that span reads GLGLTRP. S164 is a K(+) binding site.

It belongs to the NnrE/AIBP family. It depends on K(+) as a cofactor.

It carries out the reaction (6R)-NADHX = (6S)-NADHX. The catalysed reaction is (6R)-NADPHX = (6S)-NADPHX. Functionally, catalyzes the epimerization of the S- and R-forms of NAD(P)HX, a damaged form of NAD(P)H that is a result of enzymatic or heat-dependent hydration. This is a prerequisite for the S-specific NAD(P)H-hydrate dehydratase to allow the repair of both epimers of NAD(P)HX. In Rhodobacter capsulatus (strain ATCC BAA-309 / NBRC 16581 / SB1003), this protein is NAD(P)H-hydrate epimerase.